A 258-amino-acid chain; its full sequence is Imidazole glycerol phosphate synthase subunit HisF (258 aa).

Catalysis depends on residues aspartate 11 and aspartate 130.

It belongs to the HisA/HisF family. As to quaternary structure, heterodimer of HisH and HisF.

It is found in the cytoplasm. It catalyses the reaction 5-[(5-phospho-1-deoxy-D-ribulos-1-ylimino)methylamino]-1-(5-phospho-beta-D-ribosyl)imidazole-4-carboxamide + L-glutamine = D-erythro-1-(imidazol-4-yl)glycerol 3-phosphate + 5-amino-1-(5-phospho-beta-D-ribosyl)imidazole-4-carboxamide + L-glutamate + H(+). It functions in the pathway amino-acid biosynthesis; L-histidine biosynthesis; L-histidine from 5-phospho-alpha-D-ribose 1-diphosphate: step 5/9. Its function is as follows. IGPS catalyzes the conversion of PRFAR and glutamine to IGP, AICAR and glutamate. The HisF subunit catalyzes the cyclization activity that produces IGP and AICAR from PRFAR using the ammonia provided by the HisH subunit. The sequence is that of Imidazole glycerol phosphate synthase subunit HisF from Escherichia coli O127:H6 (strain E2348/69 / EPEC).